The following is a 236-amino-acid chain: Small ribosomal subunit protein uS2c (236 aa).

It belongs to the universal ribosomal protein uS2 family.

The protein localises to the plastid. It localises to the chloroplast. The sequence is that of Small ribosomal subunit protein uS2c (rps2) from Amborella trichopoda.